The primary structure comprises 148 residues: UPF0208 membrane protein HD_1715 (148 aa).

Transmembrane regions (helical) follow at residues 41–60 (AARF…YFFT) and 66–88 (ILAN…LYWL).

Belongs to the UPF0208 family.

It localises to the cell inner membrane. The polypeptide is UPF0208 membrane protein HD_1715 (Haemophilus ducreyi (strain 35000HP / ATCC 700724)).